Reading from the N-terminus, the 408-residue chain is MINYFFIFLVPSLGMVAGLSVAATVTVFLLISLLQNIAAWIPNRHCEEQSDVAISLNILRLLRQLFCNFLAMTIKTELLFAGWCLISCLFAIKPINSLINFVQVFTILFLGFVVSNFKPFQNRPKLKKALIFGTLTGILLFFVEYFSYGFLTRIFKANFNLYMLDRGCALLSITAWVVIAILIYDKKYCPALILYILVLYLLSISDSLASFLGFSLGGIVFILARFIKPIFSKLIIFGLITGSLLFPIIAGQINPKGLSDKYLTTHPSAAHRLFIWHFVANKIAEKPLMINGFNSSKYTQVKDSEMIDYKGEKWHPLPLHPHNNILQITLELGLIGLALFLSLVYKYLKQIGNIGNDNFRASSYACFINYYIIGMISYNVWQIWWIASSIWVLILMKLLVKPDIVIDK.

10 helical membrane passes run 5–25 (FFIF…AATV), 72–92 (MTIK…LFAI), 94–114 (PINS…GFVV), 130–150 (LIFG…SYGF), 163–183 (MLDR…AILI), 192–212 (LILY…ASFL), 230–250 (IFSK…PIIA), 325–345 (ILQI…SLVY), 359–377 (FRAS…GMIS), and 380–400 (VWQI…KLLV).

Belongs to the O-antigen ligase family.

The protein localises to the membrane. The sequence is that of Putative polysaccharide ligase RBE_0399 (rfaL) from Rickettsia bellii (strain RML369-C).